Consider the following 123-residue polypeptide: Fluoride-specific ion channel FluC 1 (123 aa).

3 helical membrane passes run 33-53 (TFLINISGAFVIGYLSVLFGV), 59-79 (YGTMLNAGVLTGILGGYTTFS), and 98-118 (VFYLVASVLSGLFAAWLGAML). 2 residues coordinate Na(+): Gly73 and Thr76.

It belongs to the fluoride channel Fluc/FEX (TC 1.A.43) family.

The protein resides in the cell inner membrane. It catalyses the reaction fluoride(in) = fluoride(out). Na(+) is not transported, but it plays an essential structural role and its presence is essential for fluoride channel function. Fluoride-specific ion channel. Important for reducing fluoride concentration in the cell, thus reducing its toxicity. In Brucella melitensis biotype 1 (strain ATCC 23456 / CCUG 17765 / NCTC 10094 / 16M), this protein is Fluoride-specific ion channel FluC 1.